Here is a 246-residue protein sequence, read N- to C-terminus: 1-(5-phosphoribosyl)-5-[(5-phosphoribosylamino)methylideneamino] imidazole-4-carboxamide isomerase (246 aa).

Residue D10 is the Proton acceptor of the active site. D135 serves as the catalytic Proton donor.

Belongs to the HisA/HisF family.

The protein localises to the cytoplasm. It carries out the reaction 1-(5-phospho-beta-D-ribosyl)-5-[(5-phospho-beta-D-ribosylamino)methylideneamino]imidazole-4-carboxamide = 5-[(5-phospho-1-deoxy-D-ribulos-1-ylimino)methylamino]-1-(5-phospho-beta-D-ribosyl)imidazole-4-carboxamide. Its pathway is amino-acid biosynthesis; L-histidine biosynthesis; L-histidine from 5-phospho-alpha-D-ribose 1-diphosphate: step 4/9. In Methanosarcina mazei (strain ATCC BAA-159 / DSM 3647 / Goe1 / Go1 / JCM 11833 / OCM 88) (Methanosarcina frisia), this protein is 1-(5-phosphoribosyl)-5-[(5-phosphoribosylamino)methylideneamino] imidazole-4-carboxamide isomerase.